Reading from the N-terminus, the 159-residue chain is Phosphopantetheine adenylyltransferase (159 aa).

Substrate is bound at residue S8. ATP is bound by residues 8–9 and H16; that span reads SF. Positions 40, 72, and 86 each coordinate substrate. Residues 87 to 89, E97, and 122 to 128 each bind ATP; these read GLR and HSFVSSS.

It belongs to the bacterial CoaD family. As to quaternary structure, homohexamer. Mg(2+) is required as a cofactor.

The protein resides in the cytoplasm. It carries out the reaction (R)-4'-phosphopantetheine + ATP + H(+) = 3'-dephospho-CoA + diphosphate. It participates in cofactor biosynthesis; coenzyme A biosynthesis; CoA from (R)-pantothenate: step 4/5. In terms of biological role, reversibly transfers an adenylyl group from ATP to 4'-phosphopantetheine, yielding dephospho-CoA (dPCoA) and pyrophosphate. The sequence is that of Phosphopantetheine adenylyltransferase from Synechococcus sp. (strain JA-2-3B'a(2-13)) (Cyanobacteria bacterium Yellowstone B-Prime).